Here is a 355-residue protein sequence, read N- to C-terminus: Peptide chain release factor 1 (355 aa).

At Q233 the chain carries N5-methylglutamine. Over residues 282 to 293 (RKKEQARADSRR) the composition is skewed to basic and acidic residues. Residues 282 to 305 (RKKEQARADSRRGQVGSGDRSERI) are disordered.

Belongs to the prokaryotic/mitochondrial release factor family. Post-translationally, methylated by PrmC. Methylation increases the termination efficiency of RF1.

Its subcellular location is the cytoplasm. In terms of biological role, peptide chain release factor 1 directs the termination of translation in response to the peptide chain termination codons UAG and UAA. In Rickettsia rickettsii (strain Iowa), this protein is Peptide chain release factor 1.